The chain runs to 762 residues: N,N-dimethylformamidase beta subunit (762 aa).

In terms of assembly, heterotetramer of two DmfA1 (alpha) and two DmfA2 (beta) subunits.

The catalysed reaction is N,N-dimethylformamide + H2O = dimethylamine + formate. Its function is as follows. Hydrolyzes N,N-dimethylformamide, and to a lesser extent N,N-dimethylacetamide and N,N-diethylacetamide. Has no activity against the substituted amides N-methylformamide, N-ethylformamide, N-ethylformamide and N-methylacetamide or the unsubstituted amides formamide, nicotinamide, acetoamide, benzamide, acetamide and acrylamide. The protein is N,N-dimethylformamidase beta subunit of Paracoccus aminophilus.